We begin with the raw amino-acid sequence, 298 residues long: UTP--glucose-1-phosphate uridylyltransferase (298 aa).

Belongs to the UDPGP type 2 family.

It catalyses the reaction alpha-D-glucose 1-phosphate + UTP + H(+) = UDP-alpha-D-glucose + diphosphate. It participates in carbohydrate metabolism; nucleotide-sugar metabolism. It functions in the pathway capsule biogenesis; capsule polysaccharide biosynthesis. The chain is UTP--glucose-1-phosphate uridylyltransferase (galF) from Klebsiella pneumoniae.